A 457-amino-acid chain; its full sequence is tRNA-2-methylthio-N(6)-dimethylallyladenosine synthase (457 aa).

The MTTase N-terminal domain maps to 8-123; that stretch reads KKVFIKTFGC…LPEMLARRDA (116 aa). [4Fe-4S] cluster is bound by residues C17, C54, C86, C160, C164, and C167. The region spanning 146-379 is the Radical SAM core domain; it reads RVDGATAFVS…QEAIEANGRR (234 aa). The 68-residue stretch at 382 to 449 folds into the TRAM domain; that stretch reads QSRVGTVQRI…PHSLRGEVLL (68 aa).

The protein belongs to the methylthiotransferase family. MiaB subfamily. In terms of assembly, monomer. [4Fe-4S] cluster serves as cofactor.

It localises to the cytoplasm. The enzyme catalyses N(6)-dimethylallyladenosine(37) in tRNA + (sulfur carrier)-SH + AH2 + 2 S-adenosyl-L-methionine = 2-methylsulfanyl-N(6)-dimethylallyladenosine(37) in tRNA + (sulfur carrier)-H + 5'-deoxyadenosine + L-methionine + A + S-adenosyl-L-homocysteine + 2 H(+). Catalyzes the methylthiolation of N6-(dimethylallyl)adenosine (i(6)A), leading to the formation of 2-methylthio-N6-(dimethylallyl)adenosine (ms(2)i(6)A) at position 37 in tRNAs that read codons beginning with uridine. This Methylibium petroleiphilum (strain ATCC BAA-1232 / LMG 22953 / PM1) protein is tRNA-2-methylthio-N(6)-dimethylallyladenosine synthase.